The chain runs to 292 residues: 4-amino-L-phenylalanine/4-methylamino-L-phenylalanine methyltransferase (292 aa).

Cys-128 to Gly-132 contributes to the S-adenosyl-L-methionine binding site.

It belongs to the protein N5-glutamine methyltransferase family.

It carries out the reaction 4-amino-L-phenylalanine + S-adenosyl-L-methionine = 4-methylamino-L-phenylalanine + S-adenosyl-L-homocysteine + H(+). It catalyses the reaction 4-methylamino-L-phenylalanine + S-adenosyl-L-methionine = 4-dimethylamino-L-phenylalanine + S-adenosyl-L-homocysteine + H(+). The protein operates within antibiotic biosynthesis. In terms of biological role, involved in pristinamycin I biosynthesis. Catalyzes the SAM-dependent methylation of 4-amino-L-phenylalanine (PAPA) to 4-methylamino-L-phenylalanine (MMPAPA), and of MMPAPA to 4-dimethylamino-L-phenylalanine (DMPAPA). This chain is 4-amino-L-phenylalanine/4-methylamino-L-phenylalanine methyltransferase, found in Streptomyces pristinaespiralis.